The chain runs to 389 residues: Glutamate 5-kinase (389 aa).

Lysine 26 lines the ATP pocket. Substrate-binding residues include serine 66, aspartate 153, and asparagine 167. 187–188 contacts ATP; sequence TD. The region spanning 293 to 371 is the PUA domain; that stretch reads AGTLFLDQGA…EQIEWILGHR (79 aa).

This sequence belongs to the glutamate 5-kinase family.

It localises to the cytoplasm. It carries out the reaction L-glutamate + ATP = L-glutamyl 5-phosphate + ADP. It functions in the pathway amino-acid biosynthesis; L-proline biosynthesis; L-glutamate 5-semialdehyde from L-glutamate: step 1/2. Catalyzes the transfer of a phosphate group to glutamate to form L-glutamate 5-phosphate. This Rhodopirellula baltica (strain DSM 10527 / NCIMB 13988 / SH1) protein is Glutamate 5-kinase.